The following is a 338-amino-acid chain: uncharacterized protein (338 aa).

The TNase-like domain occupies 144–321 (HTLPVDVKAV…RAARVGLWAS (178 aa)). Active-site residues include R228, E236, and R270.

This is an uncharacterized protein from Capnoides sempervirens (Rock-harlequin).